Here is an 82-residue protein sequence, read N- to C-terminus: Metallothionein-like protein 2A (82 aa).

The protein belongs to the metallothionein superfamily. Type 15 family. Expressed in stems, leaves, rachis, inflorescences and seeds.

Functionally, metallothioneins have a high content of cysteine residues that bind various heavy metals. The polypeptide is Metallothionein-like protein 2A (MT2A) (Oryza sativa subsp. japonica (Rice)).